The following is a 621-amino-acid chain: tRNA uridine 5-carboxymethylaminomethyl modification enzyme MnmG (621 aa).

Position 17–22 (17–22 (GGGHAG)) interacts with FAD. 276-290 (GPRYCPSIEDKIMKF) serves as a coordination point for NAD(+).

The protein belongs to the MnmG family. Homodimer. Heterotetramer of two MnmE and two MnmG subunits. FAD serves as cofactor.

The protein localises to the cytoplasm. Its function is as follows. NAD-binding protein involved in the addition of a carboxymethylaminomethyl (cmnm) group at the wobble position (U34) of certain tRNAs, forming tRNA-cmnm(5)s(2)U34. This Zymomonas mobilis subsp. mobilis (strain ATCC 31821 / ZM4 / CP4) protein is tRNA uridine 5-carboxymethylaminomethyl modification enzyme MnmG.